We begin with the raw amino-acid sequence, 871 residues long: Tegument protein UL47 homolog (871 aa).

The disordered stretch occupies residues 1-212; sequence MDQHHGARGG…DEDDMEVIRD (212 aa). The short motif at 13 to 33 is the Nuclear localization signal element; it reads IRRPRRSIESRSHPFRATGNT. Composition is skewed to polar residues over residues 30 to 41 and 59 to 81; these read TGNTQRTYSTPR and EQAS…STSF. 3 stretches are compositionally biased toward acidic residues: residues 114–134, 146–155, and 185–207; these read SSSE…EEDQ, SSDENDEEED, and SESE…EDDM.

Belongs to the alphaherpesvirinae HHV-1 UL47 family. Interacts with US3 kinase. Interacts with UL31 and UL34; these interactions seem important for efficient virion nuclear egress. Interacts with UL41/VHS. Phosphorylated by US3. This phosphorylation is required for proper nuclear localization.

The protein resides in the virion tegument. It is found in the host nucleus. The protein localises to the host cytoplasm. In terms of biological role, tegument protein that can bind to various RNA transcripts. Plays a role in the attenuation of selective viral and cellular mRNA degradation by modulating the activity of host shutoff RNase UL41/VHS. Also plays a role in the primary envelopment of virions in the perinuclear space, probably by interacting with two nuclear egress proteins UL31 and UL34. The protein is Tegument protein UL47 homolog of Equine herpesvirus 1 (strain V592) (EHV-1).